Here is a 341-residue protein sequence, read N- to C-terminus: Methionine import ATP-binding protein MetN 2 (341 aa).

The ABC transporter domain maps to 2–241; it reads IELKEVVKEY…PQHTVTKRFV (240 aa). Residue 38 to 45 coordinates ATP; the sequence is GFSGAGKS.

It belongs to the ABC transporter superfamily. Methionine importer (TC 3.A.1.24) family. As to quaternary structure, the complex is composed of two ATP-binding proteins (MetN), two transmembrane proteins (MetI) and a solute-binding protein (MetQ).

It localises to the cell membrane. The enzyme catalyses L-methionine(out) + ATP + H2O = L-methionine(in) + ADP + phosphate + H(+). The catalysed reaction is D-methionine(out) + ATP + H2O = D-methionine(in) + ADP + phosphate + H(+). Its function is as follows. Part of the ABC transporter complex MetNIQ involved in methionine import. Responsible for energy coupling to the transport system. The chain is Methionine import ATP-binding protein MetN 2 from Staphylococcus aureus (strain bovine RF122 / ET3-1).